The sequence spans 426 residues: uncharacterized protein (426 aa).

To M.leprae L518_C2_147 and M.tuberculosis Rv1524.

This is an uncharacterized protein from Mycobacterium tuberculosis (strain CDC 1551 / Oshkosh).